We begin with the raw amino-acid sequence, 246 residues long: tRNA (guanine-N(1)-)-methyltransferase (246 aa).

S-adenosyl-L-methionine-binding positions include Gly113 and 133 to 138 (IGDYVL).

It belongs to the RNA methyltransferase TrmD family. Homodimer.

It localises to the cytoplasm. The enzyme catalyses guanosine(37) in tRNA + S-adenosyl-L-methionine = N(1)-methylguanosine(37) in tRNA + S-adenosyl-L-homocysteine + H(+). Its function is as follows. Specifically methylates guanosine-37 in various tRNAs. This Yersinia pseudotuberculosis serotype O:1b (strain IP 31758) protein is tRNA (guanine-N(1)-)-methyltransferase.